The chain runs to 459 residues: MRNDPFQRLGLDREVLTVSQLNQRARLLLEDVFPQVWVEGELSNLARPASGHVYFTLKDSNAQIRCALFRQNALRVRQALRDGLAVKVRGKISLFEGRGDYQLIADTVEPAGDGALRLAFEALKEKLAGEGLFASERKRPLPAHPRRIGIVSSPSGAVIRDIISVFRRRAPQVELTLVPTAVQGREAVAQIVRALQLADRQGFDALILARGGGSLEDLWCFNEEAVARAVAACATPIVSAVGHETDVSISDFVADVRAPTPSAAAELLAPNAGDLQQRLDGLRRRLVLRMRDQLLRERLRLEGVARRLRHPGERLRQQAQRLDDLDMRLRRAFERHLAVRHERLVRLETRLAAQHPGRTLALLRQKLDSLAARLPRAAREVLKDRRQHLEGLAQTLNVVSPLATLGRGYSILLDERGRAIRDAGQTQPGQRLKARLAEGELEVRVEDNHRTPVTLSLLD.

Belongs to the XseA family. As to quaternary structure, heterooligomer composed of large and small subunits.

It localises to the cytoplasm. The catalysed reaction is Exonucleolytic cleavage in either 5'- to 3'- or 3'- to 5'-direction to yield nucleoside 5'-phosphates.. Functionally, bidirectionally degrades single-stranded DNA into large acid-insoluble oligonucleotides, which are then degraded further into small acid-soluble oligonucleotides. This Pseudomonas aeruginosa (strain UCBPP-PA14) protein is Exodeoxyribonuclease 7 large subunit.